A 181-amino-acid polypeptide reads, in one-letter code: Oligoribonuclease (181 aa).

Positions 8–171 (LIWIDLEMTG…DDIRESVAEL (164 aa)) constitute an Exonuclease domain. The active site involves tyrosine 129.

Belongs to the oligoribonuclease family. As to quaternary structure, homodimer.

The protein resides in the cytoplasm. In terms of biological role, 3'-to-5' exoribonuclease specific for small oligoribonucleotides. This Escherichia coli O157:H7 protein is Oligoribonuclease.